The following is a 509-amino-acid chain: Ribonuclease Y (509 aa).

A helical membrane pass occupies residues 5-25 (IIILLSVFCGIFFICFIICSS). The region spanning 199 to 259 (TTNIVKLPSD…IRREIATRTL (61 aa)) is the KH domain. The 94-residue stretch at 325-418 (VLAHSIEVAK…VAIADSISAS (94 aa)) folds into the HD domain.

Belongs to the RNase Y family.

The protein localises to the cell membrane. Functionally, endoribonuclease that initiates mRNA decay. This Mycoplasma capricolum subsp. capricolum (strain California kid / ATCC 27343 / NCTC 10154) protein is Ribonuclease Y.